Consider the following 656-residue polypeptide: Methylenetetrahydrofolate reductase (NADPH) (656 aa).

A compositionally biased stretch (polar residues) spans 1–12 (MVNEARGNSSLN). Residues 1–44 (MVNEARGNSSLNPCLEGSASSGSESSKDSSRCSTPGLDPERHER) are disordered. A phosphoserine mark is found at Ser9, Ser10, Ser18, Ser20, Ser21, Ser23, Ser25, Ser26, Ser29, and Ser30. Residue Thr34 is modified to Phosphothreonine. The active-site Proton donor/acceptor is Glu63. 63-68 (EFFPPR) contacts NAD(+). Tyr90 carries the phosphotyrosine modification. At Thr94 the chain carries Phosphothreonine. 94 to 95 (TW) is an NAD(+) binding site. 94–95 (TW) is a binding site for FAD. Residue Ser103 is modified to Phosphoserine. FAD is bound by residues His127, 157–159 (RGD), 174–175 (YA), Tyr197, 201–204 (HPEA), Asp210, and Lys217. Residue Asp159 coordinates substrate. The substrate site is built by Gln228, Tyr321, and Arg325. Position 394 is a phosphoserine (Ser394). At Thr451 the chain carries Phosphothreonine. S-adenosyl-L-methionine contacts are provided by residues Asn456, 461–464 (AAET), 481–485 (TINSQ), Thr560, and Thr573.

The protein belongs to the methylenetetrahydrofolate reductase family. As to quaternary structure, homodimer. FAD is required as a cofactor. Phosphorylation of an N-terminal serine-rich phosphorylation region increases sensitivity to S-adenosylmethionine and inhibition.

The enzyme catalyses (6S)-5-methyl-5,6,7,8-tetrahydrofolate + NADP(+) = (6R)-5,10-methylene-5,6,7,8-tetrahydrofolate + NADPH + H(+). It functions in the pathway one-carbon metabolism; tetrahydrofolate interconversion. With respect to regulation, allosterically regulated by S-adenosylmethionine (SAM). Its function is as follows. Catalyzes the conversion of 5,10-methylenetetrahydrofolate to 5-methyltetrahydrofolate, a cosubstrate for homocysteine remethylation to methionine. Represents a key regulatory connection between the folate and methionine cycles. This chain is Methylenetetrahydrofolate reductase (NADPH), found in Homo sapiens (Human).